A 510-amino-acid polypeptide reads, in one-letter code: MFIESFRVESPKVRYGAGEIESEYRYDTTELVHESHDGASKWVVRPKSVNYHFKTNTTVPKLGVMLVGWGGNNGSTLMAGVIANREGISWATKDKVQQANYFGSLTQASTIRVGSYNGEEIYAPFKSLLPMVNPDDLVFGGWDISSMNLADAMTRAKVLDIDLQKQLRPYMESMCPLPGIYDPDFIAANQGSRANNVIKGTKKEQMEQVIKDIREFKEKNKVDKVVVLWTANTERYSNVSVGLNDTTENLLASVDKNEAEISPSTLYAIACVMEGVPFINGSPQNTFVPGLIDLAIKNDCLIGGDDFKSGQTKMKSVLVDFLVGAGIKPTSIVSYNHLGNNDGMNLSAPQTFRSKEISKSNVVDDMVSSNAILYEPGEHPDHVVVIKYVPYVGDSKRAMDEYTSEIFMGGKSTIVLHNTCEDSLLRAPIILDLVLLAELSTRIQLKAEGEDKLHSFHPVATILSYLTKAPLVPPGTPVVNALAKQRAMLENIMRACVGLAPENNMILEYK.

Positions 70, 71, 72, 73, 143, 180, 190, 193, 230, 231, 232, 233, 281, 282, 306, 309, 340, 341, 342, 355, 393, 394, 422, and 423 each coordinate NAD(+).

The protein belongs to the myo-inositol 1-phosphate synthase family. The cofactor is NAD(+).

Its subcellular location is the cytoplasm. It is found in the cytosol. It localises to the nucleus. The catalysed reaction is D-glucose 6-phosphate = 1D-myo-inositol 3-phosphate. It functions in the pathway polyol metabolism; myo-inositol biosynthesis; myo-inositol from D-glucose 6-phosphate: step 1/2. Functionally, key enzyme in myo-inositol biosynthesis pathway that catalyzes the conversion of glucose 6-phosphate to 1-myo-inositol 1-phosphate in a NAD-dependent manner. The sequence is that of Inositol-3-phosphate synthase from Hordeum vulgare (Barley).